We begin with the raw amino-acid sequence, 448 residues long: Binary larvicide subunit BinB (448 aa).

Residues 19-200 form a beta-trefoil domain region; it reads TNYPLNTTPT…FVNSSFYAAA (182 aa). A disulfide bridge links Cys-67 with Cys-161. The probable pore-forming domain stretch occupies residues 226-407; the sequence is PKDAVRAVKG…APITNPLTLT (182 aa).

Belongs to the toxin_10 family. In terms of assembly, forms a heterodimer with BinA. In terms of processing, processed by proteases extracted from mosquito larval gut.

It is found in the spore. The protein localises to the perispore. Component of a binary toxin active against Culex and some Aedes mosquito larvae. This subunit is responsible for localized binding to specific regions of the host larval gut. The individual subunits are not toxic. BinAB and this subunit alone bind to the gastric caecum and posterior midgut of C.quinquefasciatus larvae. Binary toxin internalization into host gut cells requires both proteins. Does not bind to the midgut of Aedes aegypti. Toxic to Aedes atropalpus mosquito larvae; mortality towards both C.quinquefasciatus and A.atropalpus is maximal by 48 hours. A.aegypti is not very susceptible to this toxin. Binding component of binary toxin. The 51 kDa polypeptide acts synergetically with the 42 kDa polypeptide for expression of a larvicidal toxin. The sequence is that of Binary larvicide subunit BinB from Lysinibacillus sphaericus (Bacillus sphaericus).